Reading from the N-terminus, the 389-residue chain is tRNA-specific 2-thiouridylase MnmA (389 aa).

ATP contacts are provided by residues 35–42 (GMSGGVDS) and Met61. The interval 121-123 (NPD) is interaction with target base in tRNA. The active-site Nucleophile is Cys126. A disulfide bridge links Cys126 with Cys223. Residue Gly151 coordinates ATP. The segment at 173 to 175 (KDQ) is interaction with tRNA. Cys223 acts as the Cysteine persulfide intermediate in catalysis. An interaction with tRNA region spans residues 335 to 336 (RY).

This sequence belongs to the MnmA/TRMU family.

The protein resides in the cytoplasm. The catalysed reaction is S-sulfanyl-L-cysteinyl-[protein] + uridine(34) in tRNA + AH2 + ATP = 2-thiouridine(34) in tRNA + L-cysteinyl-[protein] + A + AMP + diphosphate + H(+). Functionally, catalyzes the 2-thiolation of uridine at the wobble position (U34) of tRNA, leading to the formation of s(2)U34. In Actinobacillus succinogenes (strain ATCC 55618 / DSM 22257 / CCUG 43843 / 130Z), this protein is tRNA-specific 2-thiouridylase MnmA.